A 588-amino-acid polypeptide reads, in one-letter code: Probable basic-leucine zipper transcription factor M (588 aa).

The stretch at 127-157 (QVEQQQEQEQEQEQQQKQQQQQYIEKQIQEI) forms a coiled coil. The segment covering 221 to 240 (QQNHIDNQSLNNSNTKTSKN) has biased composition (low complexity). The tract at residues 221–250 (QQNHIDNQSLNNSNTKTSKNQQKDNNLPKK) is disordered. The region spanning 263–326 (NNNNIEKKRD…GSNLMRPEPE (64 aa)) is the bZIP domain. Residues 269–289 (KKRDQTESSKNFREKKKEYVK) are basic motif. The tract at residues 291–312 (IESKILALTLENDKLKKENDSL) is leucine-zipper.

The protein belongs to the bZIP family.

Its subcellular location is the nucleus. Its function is as follows. Probable transcriptional regulator. The chain is Probable basic-leucine zipper transcription factor M (bzpM) from Dictyostelium discoideum (Social amoeba).